We begin with the raw amino-acid sequence, 396 residues long: DNA excision repair protein ERCC-8 (396 aa).

WD repeat units follow at residues Asn-33–Leu-73, Cys-88–Thr-129, Gln-133–Leu-173, Ser-177–Val-216, Gln-235–Ser-274, Leu-281–Val-321, and Glu-325–Pro-363. Residues Asp-371–Gly-396 are disordered. A phosphoserine mark is found at Ser-390, Ser-391, and Ser-392.

As to quaternary structure, part of the CSA complex (also named DCX(ERCC8) complex), a DCX E3 ubiquitin-protein ligase complex containing ERCC8, RBX1, DDB1 and CUL4A; the CSA complex interacts with RNA polymerase II; upon UV irradiation it interacts with the COP9 signalosome and preferentially with the hyperphosphorylated form of RNA polymerase II. Interacts with ERCC6/CSB (via CIM motif); promoting recruitment to lesion-stalled RNA polymerase II (Pol II). Interacts with KIAA1530/UVSSA. Interacts with a subunit of RNA polymerase II TFIIH.

Its subcellular location is the nucleus. The protein resides in the chromosome. The protein localises to the nucleus matrix. It functions in the pathway protein modification; protein ubiquitination. Its function is as follows. Substrate-recognition component of the CSA complex, a DCX (DDB1-CUL4-X-box) E3 ubiquitin-protein ligase complex, involved in transcription-coupled nucleotide excision repair (TC-NER), a process during which RNA polymerase II-blocking lesions are rapidly removed from the transcribed strand of active genes. Following recruitment to lesion-stalled RNA polymerase II (Pol II), the CSA complex mediates ubiquitination of Pol II subunit POLR2A/RPB1 at 'Lys-1268', a critical TC-NER checkpoint, governing RNA Pol II stability and initiating DNA damage excision by TFIIH recruitment. The CSA complex also promotes the ubiquitination and subsequent proteasomal degradation of ERCC6/CSB in a UV-dependent manner; ERCC6 degradation is essential for the recovery of RNA synthesis after transcription-coupled repair. Also plays a role in DNA double-strand breaks (DSSBs) repair by non-homologous end joining (NHEJ). The sequence is that of DNA excision repair protein ERCC-8 from Homo sapiens (Human).